Reading from the N-terminus, the 106-residue chain is uncharacterized protein (106 aa).

2 helical membrane-spanning segments follow: residues 25–45 (VMNVVLNTLFSFVLAPYIHYI) and 62–82 (ICFLAKFSFLLVFLFYLNFQG).

It localises to the membrane. This is an uncharacterized protein from Saccharomyces cerevisiae (strain ATCC 204508 / S288c) (Baker's yeast).